Here is a 209-residue protein sequence, read N- to C-terminus: Ribosomal RNA large subunit methyltransferase E (209 aa).

S-adenosyl-L-methionine contacts are provided by G63, W65, D83, D99, and D124. Catalysis depends on K164, which acts as the Proton acceptor.

This sequence belongs to the class I-like SAM-binding methyltransferase superfamily. RNA methyltransferase RlmE family.

It localises to the cytoplasm. It catalyses the reaction uridine(2552) in 23S rRNA + S-adenosyl-L-methionine = 2'-O-methyluridine(2552) in 23S rRNA + S-adenosyl-L-homocysteine + H(+). Its function is as follows. Specifically methylates the uridine in position 2552 of 23S rRNA at the 2'-O position of the ribose in the fully assembled 50S ribosomal subunit. In Aliivibrio salmonicida (strain LFI1238) (Vibrio salmonicida (strain LFI1238)), this protein is Ribosomal RNA large subunit methyltransferase E.